Reading from the N-terminus, the 420-residue chain is Pre-mRNA-splicing factor RBM22 (420 aa).

N-acetylalanine is present on alanine 2. Phosphoserine is present on residues serine 4 and serine 102. Residues lysine 139 and lysine 149 each participate in a glycyl lysine isopeptide (Lys-Gly) (interchain with G-Cter in SUMO2) cross-link. The C3H1-type zinc finger occupies 159 to 186; the sequence is RNRPHICSFWVKGECKRGEECPYRHEKP. N6-acetyllysine is present on lysine 212. An RRM domain is found at 232 to 305; sequence TTLYVGGLGD…RRLNVKWGRS (74 aa). Residue lysine 290 forms a Glycyl lysine isopeptide (Lys-Gly) (interchain with G-Cter in SUMO2) linkage. Disordered regions lie at residues 303 to 343 and 371 to 420; these read GRSQ…AAEE and IAPP…HSSP. Basic and acidic residues predominate over residues 309 to 318; sequence RGKEKEKDGT.

This sequence belongs to the SLT11 family. As to quaternary structure, component of the pre-catalytic and catalytic spliceosome complexes. Component of the postcatalytic spliceosome P complex. Interacts with PDCD6; the interaction induces translocation of PDCD6 in the cytoplasm. Interacts with PPIL1.

Its subcellular location is the nucleus. It is found in the cytoplasm. In terms of biological role, required for pre-mRNA splicing as component of the activated spliceosome. Involved in the first step of pre-mRNA splicing. Binds directly to the internal stem-loop (ISL) domain of the U6 snRNA and to the pre-mRNA intron near the 5' splice site during the activation and catalytic phases of the spliceosome cycle. Involved in both translocations of the nuclear SLU7 to the cytoplasm and the cytosolic calcium-binding protein PDCD6 to the nucleus upon cellular stress responses. This Rattus norvegicus (Rat) protein is Pre-mRNA-splicing factor RBM22 (Rbm22).